Consider the following 513-residue polypeptide: Maturase K (513 aa).

Belongs to the intron maturase 2 family. MatK subfamily.

The protein resides in the plastid. The protein localises to the chloroplast. Functionally, usually encoded in the trnK tRNA gene intron. Probably assists in splicing its own and other chloroplast group II introns. This chain is Maturase K, found in Keckiella cordifolia (Heart-leafed penstemon).